The primary structure comprises 316 residues: HPr kinase/phosphorylase (316 aa).

Residues His143 and Lys164 contribute to the active site. 158–165 is a binding site for ATP; it reads GEAGSGKS. Ser165 is a binding site for Mg(2+). The Proton acceptor; for phosphorylation activity. Proton donor; for dephosphorylation activity role is filled by Asp182. Residues 206 to 215 form an important for the catalytic mechanism of both phosphorylation and dephosphorylation region; sequence LEVRGLGVLN. Glu207 serves as a coordination point for Mg(2+). Residue Arg251 is part of the active site. The tract at residues 272-277 is important for the catalytic mechanism of dephosphorylation; it reads PVMPGR.

This sequence belongs to the HPrK/P family. In terms of assembly, homohexamer. Mg(2+) is required as a cofactor.

It catalyses the reaction [HPr protein]-L-serine + ATP = [HPr protein]-O-phospho-L-serine + ADP + H(+). The enzyme catalyses [HPr protein]-O-phospho-L-serine + phosphate + H(+) = [HPr protein]-L-serine + diphosphate. In terms of biological role, catalyzes the ATP- as well as the pyrophosphate-dependent phosphorylation of a specific serine residue in HPr, a phosphocarrier protein of the phosphoenolpyruvate-dependent sugar phosphotransferase system (PTS). HprK/P also catalyzes the pyrophosphate-producing, inorganic phosphate-dependent dephosphorylation (phosphorolysis) of seryl-phosphorylated HPr (P-Ser-HPr). The chain is HPr kinase/phosphorylase from Xanthomonas campestris pv. campestris (strain 8004).